We begin with the raw amino-acid sequence, 325 residues long: Protease HtpX homolog 2 (325 aa).

Helical transmembrane passes span 10–30 (LNMA…ALAV) and 41–61 (VGLI…QWLF). His147 provides a ligand contact to Zn(2+). Residue Glu148 is part of the active site. His151 is a binding site for Zn(2+). 2 helical membrane-spanning segments follow: residues 159-179 (LLMA…WLFW) and 196-216 (LVFL…LLVL). Zn(2+) is bound at residue Glu223.

It belongs to the peptidase M48B family. Zn(2+) serves as cofactor.

It localises to the cell membrane. This Saccharolobus solfataricus (strain ATCC 35092 / DSM 1617 / JCM 11322 / P2) (Sulfolobus solfataricus) protein is Protease HtpX homolog 2.